Reading from the N-terminus, the 338-residue chain is Glycerol-3-phosphate dehydrogenase [NAD(P)+] (338 aa).

NADPH is bound by residues Ser13, Trp14, and Lys108. Residues Lys108, Gly139, and Ser141 each coordinate sn-glycerol 3-phosphate. Ala143 contacts NADPH. Residues Lys194, Asp247, Ser257, Arg258, and Asn259 each coordinate sn-glycerol 3-phosphate. Lys194 (proton acceptor) is an active-site residue. Arg258 provides a ligand contact to NADPH. NADPH is bound by residues Val282 and Glu284.

This sequence belongs to the NAD-dependent glycerol-3-phosphate dehydrogenase family.

Its subcellular location is the cytoplasm. The catalysed reaction is sn-glycerol 3-phosphate + NAD(+) = dihydroxyacetone phosphate + NADH + H(+). It carries out the reaction sn-glycerol 3-phosphate + NADP(+) = dihydroxyacetone phosphate + NADPH + H(+). Its pathway is membrane lipid metabolism; glycerophospholipid metabolism. Catalyzes the reduction of the glycolytic intermediate dihydroxyacetone phosphate (DHAP) to sn-glycerol 3-phosphate (G3P), the key precursor for phospholipid synthesis. The protein is Glycerol-3-phosphate dehydrogenase [NAD(P)+] of Streptococcus uberis (strain ATCC BAA-854 / 0140J).